The sequence spans 295 residues: Small ribosomal subunit protein uS2 (295 aa).

The interval 273–295 is disordered; that stretch reads WAASSAPAAETLADPAADPSVKW. Residues 274-295 are compositionally biased toward low complexity; the sequence is AASSAPAAETLADPAADPSVKW.

This sequence belongs to the universal ribosomal protein uS2 family. In terms of assembly, component of the small ribosomal subunit. Mature ribosomes consist of a small (40S) and a large (60S) subunit. The 40S subunit contains about 33 different proteins and 1 molecule of RNA (18S). The 60S subunit contains about 49 different proteins and 3 molecules of RNA (25S, 5.8S and 5S). Interacts with RPS21.

The protein localises to the cytoplasm. Its function is as follows. Required for the assembly and/or stability of the 40S ribosomal subunit. Required for the processing of the 20S rRNA-precursor to mature 18S rRNA in a late step of the maturation of 40S ribosomal subunits. The sequence is that of Small ribosomal subunit protein uS2 from Paracoccidioides lutzii (strain ATCC MYA-826 / Pb01) (Paracoccidioides brasiliensis).